The sequence spans 535 residues: Lecithin-cholesterol acyltransferase-like 4 (535 aa).

N-acetylserine is present on S2. Catalysis depends on S182, which acts as the Acyl-ester intermediate. Residues D391 and H416 each act as charge relay system in the active site. A compositionally biased stretch (polar residues) spans 488 to 505 (STVNSISVSQPGDDQNPQ). The tract at residues 488–507 (STVNSISVSQPGDDQNPQAE) is disordered.

It belongs to the AB hydrolase superfamily. Lipase family.

This chain is Lecithin-cholesterol acyltransferase-like 4 (LCAT4), found in Arabidopsis thaliana (Mouse-ear cress).